The following is a 149-amino-acid chain: Nucleoside diphosphate kinase (149 aa).

Lys9, Phe57, Arg85, Thr91, Arg102, and Asn112 together coordinate ATP. The active-site Pros-phosphohistidine intermediate is the His115.

Belongs to the NDK family. In terms of assembly, homotetramer. It depends on Mg(2+) as a cofactor.

The protein resides in the cytoplasm. The catalysed reaction is a 2'-deoxyribonucleoside 5'-diphosphate + ATP = a 2'-deoxyribonucleoside 5'-triphosphate + ADP. It catalyses the reaction a ribonucleoside 5'-diphosphate + ATP = a ribonucleoside 5'-triphosphate + ADP. In terms of biological role, major role in the synthesis of nucleoside triphosphates other than ATP. The ATP gamma phosphate is transferred to the NDP beta phosphate via a ping-pong mechanism, using a phosphorylated active-site intermediate. The sequence is that of Nucleoside diphosphate kinase from Gloeobacter violaceus (strain ATCC 29082 / PCC 7421).